Reading from the N-terminus, the 195-residue chain is Neurensin-1 (195 aa).

The next 2 helical transmembrane spans lie at 66-86 and 120-140; these read LISG…GFLV and AVLF…SVFV.

It belongs to the VMP family. In terms of tissue distribution, expressed in brain. Not detectable in other tissues tested.

It localises to the membrane. The protein resides in the cell projection. The protein localises to the neuron projection. In terms of biological role, may play an important role in neural organelle transport, and in transduction of nerve signals or in nerve growth. May play a role in neurite extension. May play a role in memory consolidation. The chain is Neurensin-1 from Homo sapiens (Human).